The sequence spans 1912 residues: Chromodomain-helicase-DNA-binding protein 4 (1912 aa).

Positions 1 to 157 (MASGLGSPSP…PKSSAQLLED (157 aa)) are disordered. Residues 35–45 (NEEDPEEDLSE) show a composition bias toward acidic residues. Ser44 bears the Phosphoserine mark. Positions 113–131 (GKKKKKKLGPKKEKKSKSK) are enriched in basic residues. Lys133 is covalently cross-linked (Glycyl lysine isopeptide (Lys-Gly) (interchain with G-Cter in SUMO2)). The span at 135 to 145 (EEEEEDDDDDS) shows a compositional bias: acidic residues. Glycyl lysine isopeptide (Lys-Gly) (interchain with G-Cter in SUMO2) cross-links involve residues Lys146, Lys179, and Lys297. The segment at 243 to 360 (ATEVAPPPPP…KKKKGEEEVT (118 aa)) is disordered. The short motif at 295 to 298 (KIKL) is the KIKL element. Ser303 bears the Phosphoserine mark. A Glycyl lysine isopeptide (Lys-Gly) (interchain with G-Cter in SUMO2) cross-link involves residue Lys304. Residues Ser308, Ser309, Ser310, and Ser319 each carry the phosphoserine modification. Residues 311–323 (EDDDLDVESDFDD) are compositionally biased toward acidic residues. The span at 340 to 353 (SRSRKKLRTTKKKK) shows a compositional bias: basic residues. Thr367 carries the post-translational modification Phosphothreonine. The segment at 370–417 (QDYCEVCQQGGEIILCDTCPRAYHMVCLDPDMEKAPEGKWSCPHCEKE) adopts a PHD-type 1 zinc-finger fold. Ser428 carries the phosphoserine modification. A PHD-type 2 zinc finger spans residues 449–496 (MEFCRVCKDGGELLCCDTCPSSYHIHCLNPPLPEIPNGEWLCPRCTCP). Residues 494 to 594 (TCPALKGKVQ…SGDFGGDEEK (101 aa)) enclose the Chromo 1 domain. Disordered stretches follow at residues 510 to 537 (WGQP…PLEG) and 578 to 603 (NDMD…NKDP). Over residues 513-522 (PPSPTPVPRP) the composition is skewed to pro residues. Ser515 bears the Phosphoserine mark. Thr517 and Thr529 each carry phosphothreonine. Position 531 is a phosphoserine (Ser531). Residues Lys618 and Lys696 each participate in a glycyl lysine isopeptide (Lys-Gly) (interchain with G-Cter in SUMO2) cross-link. Residues 622–697 (MMIHRILNHS…KLKKVKLRKL (76 aa)) form the Chromo 2 domain. Thr703 carries the phosphothreonine modification. Lys711 is covalently cross-linked (Glycyl lysine isopeptide (Lys-Gly) (interchain with G-Cter in SUMO1); alternate). A Glycyl lysine isopeptide (Lys-Gly) (interchain with G-Cter in SUMO2); alternate cross-link involves residue Lys711. One can recognise a Helicase ATP-binding domain in the interval 738-922 (RFSWAQGTDT…FHLLNFLTPE (185 aa)). Position 751–758 (751–758 (DEMGLGKT)) interacts with ATP. Positions 873–876 (DEAH) match the DEAH box motif. The Helicase C-terminal domain occupies 1054-1203 (LLQKMLKNLK…LTHLVVRPGL (150 aa)). Residue Ser1209 is modified to Phosphoserine. Glycyl lysine isopeptide (Lys-Gly) (interchain with G-Cter in SUMO2) cross-links involve residues Lys1212, Lys1228, Lys1239, and Lys1304. Phosphoserine is present on residues Ser1308, Ser1349, and Ser1370. 2 disordered regions span residues 1344–1401 (NYND…KPLP) and 1525–1562 (EENK…PAED). Glycyl lysine isopeptide (Lys-Gly) (interchain with G-Cter in SUMO2) cross-links involve residues Lys1528 and Lys1529. Phosphoserine is present on residues Ser1531, Ser1535, and Ser1537. Residues 1535–1544 (SPSPKTPTPS) show a composition bias toward pro residues. Thr1542, Thr1549, and Thr1553 each carry phosphothreonine. Residue Lys1565 forms a Glycyl lysine isopeptide (Lys-Gly) (interchain with G-Cter in SUMO2) linkage. Ser1570 carries the phosphoserine modification. A compositionally biased stretch (basic and acidic residues) spans 1570–1584 (SLKEEESIEGEKEVK). Disordered regions lie at residues 1570–1589 (SLKE…TAPE) and 1594–1644 (CTQA…VEKV). Lys1572 is covalently cross-linked (Glycyl lysine isopeptide (Lys-Gly) (interchain with G-Cter in SUMO2)). Ser1576 bears the Phosphoserine mark. The required for interaction with PCNT stretch occupies residues 1577–1912 (IEGEKEVKST…PTPQQVAQQQ (336 aa)). Lys1584 is covalently cross-linked (Glycyl lysine isopeptide (Lys-Gly) (interchain with G-Cter in SUMO2)). Ser1602 carries the post-translational modification Phosphoserine. The span at 1603 to 1644 (EDEKVVVEPPEGEEKVEKAEVKERTEEPMETEPKGAADVEKV) shows a compositional bias: basic and acidic residues. Residues Lys1606, Lys1617, and Lys1636 each participate in a glycyl lysine isopeptide (Lys-Gly) (interchain with G-Cter in SUMO2) cross-link. A Glycyl lysine isopeptide (Lys-Gly) (interchain with G-Cter in SUMO2); alternate cross-link involves residue Lys1643. An N6-acetyllysine; alternate modification is found at Lys1643. Lys1647 is covalently cross-linked (Glycyl lysine isopeptide (Lys-Gly) (interchain with G-Cter in SUMO2)). Thr1653 carries the post-translational modification Phosphothreonine. Residues Lys1660 and Lys1670 each participate in a glycyl lysine isopeptide (Lys-Gly) (interchain with G-Cter in SUMO2) cross-link. Phosphothreonine is present on Thr1679. Glycyl lysine isopeptide (Lys-Gly) (interchain with G-Cter in SUMO2) cross-links involve residues Lys1687 and Lys1865.

It belongs to the SNF2/RAD54 helicase family. Component of the nucleosome remodeling and deacetylase (NuRD) repressor complex, composed of core proteins MTA1, MTA2, MTA3, RBBP4, RBBP7, HDAC1, HDAC2, MBD2, MBD3, and peripherally associated proteins CDK2AP1, CDK2AP2, GATAD2A, GATAD2B, CHD3, CHD4 and CHD5. The exact stoichiometry of the NuRD complex is unknown, and some subunits such as MBD2 and MBD3, GATAD2A and GATAD2B, and CHD3, CHD4 and CHD5 define mutually exclusive NuRD complexes. Interacts with IKFZ1; the interaction is direct and when in part of the NuRD complex. Part of a complex containing ATR and HDAC2. Interacts with HDAC2; the interaction is direct. Interacts with the cohesin complex component RAD21; the interaction is direct. Interacts with the ISWI chromatin remodeling complex component SMARCA5; the interaction is direct. Interacts with ZGPAT; the interaction is direct. Interacts with ZMYND8; the interaction is direct, appears to occur with monomeric ZMYND8, and is increased following DNA damage. Interacts with BCL6. Interacts with BRD4. Interacts with CBX1. Interacts with CBX3. Interacts with CBX5. Interacts with GATAD2A. Interacts with HDAC1. Interacts with KLF1; the interaction depends on sumoylation of KLF1, and leads to its transcriptional repression. Interacts with MTA1. Interacts with PCNT. Interacts with RBBP7. Interacts with SETX. Interacts with TRIM27. Interacts with histone H3. Interacts with histone H4. Does not interact with PWWP2A. Does not interact with PWWP2B. Interacts (via KIKL motif) with BRD3 (via NET domain). Requires Zn(2+) as cofactor. Widely expressed.

The protein resides in the nucleus. It is found in the cytoplasm. It localises to the cytoskeleton. Its subcellular location is the microtubule organizing center. The protein localises to the centrosome. The enzyme catalyses ATP + H2O = ADP + phosphate + H(+). In terms of biological role, ATP-dependent chromatin-remodeling factor that binds and distorts nucleosomal DNA. Acts as a component of the histone deacetylase NuRD complex which participates in the remodeling of chromatin. Localizes to acetylated damaged chromatin in a ZMYND8-dependent manner, to promote transcriptional repression and double-strand break repair by homologous recombination. Involved in neurogenesis. This Homo sapiens (Human) protein is Chromodomain-helicase-DNA-binding protein 4 (CHD4).